An 873-amino-acid polypeptide reads, in one-letter code: Alanine--tRNA ligase (873 aa).

Positions 563, 567, 664, and 668 each coordinate Zn(2+).

It belongs to the class-II aminoacyl-tRNA synthetase family. The cofactor is Zn(2+).

The protein localises to the cytoplasm. The enzyme catalyses tRNA(Ala) + L-alanine + ATP = L-alanyl-tRNA(Ala) + AMP + diphosphate. Functionally, catalyzes the attachment of alanine to tRNA(Ala) in a two-step reaction: alanine is first activated by ATP to form Ala-AMP and then transferred to the acceptor end of tRNA(Ala). Also edits incorrectly charged Ser-tRNA(Ala) and Gly-tRNA(Ala) via its editing domain. The polypeptide is Alanine--tRNA ligase (Aromatoleum aromaticum (strain DSM 19018 / LMG 30748 / EbN1) (Azoarcus sp. (strain EbN1))).